The following is a 152-amino-acid chain: UPF0260 protein BAB1_1496 (152 aa).

Belongs to the UPF0260 family.

The protein is UPF0260 protein BAB1_1496 of Brucella abortus (strain 2308).